Consider the following 357-residue polypeptide: DNA integrity scanning protein DisA (357 aa).

In terms of domain architecture, DAC spans 8–146; that stretch reads VKSIINILQL…GNLRYTLKDI (139 aa). Residues glycine 75, leucine 93, and 106–110 contribute to the ATP site; that span reads MRHRT.

Belongs to the DisA family. Homooctamer. It depends on Mg(2+) as a cofactor.

The catalysed reaction is 2 ATP = 3',3'-c-di-AMP + 2 diphosphate. Its function is as follows. Participates in a DNA-damage check-point that is active prior to asymmetric division when DNA is damaged. DisA forms globular foci that rapidly scan along the chromosomes during sporulation, searching for lesions. When a lesion is present, DisA pauses at the lesion site. This triggers a cellular response that culminates in a temporary block in sporulation initiation. Also has diadenylate cyclase activity, catalyzing the condensation of 2 ATP molecules into cyclic di-AMP (c-di-AMP). c-di-AMP acts as a signaling molecule that couples DNA integrity with progression of sporulation. The rise in c-di-AMP level generated by DisA while scanning the chromosome, operates as a positive signal that advances sporulation; upon encountering a lesion, the DisA focus arrests at the damaged site and halts c-di-AMP synthesis. This Bacillus cereus (strain B4264) protein is DNA integrity scanning protein DisA.